The chain runs to 323 residues: MSRHIQYSIVVPVYNEELVIHETYQRLKEVMDQTKENYELLFVNDGSKDRSIEILREHSLIDPRVKIIDFSRNFGHQIAITAGMDYAQGNAIVVIDADLQDPPELILEMIEKWKEGYEVVYAVRTKRKGETFFKKQTAAMFYRLLSGMTDIDIPIDTGDFRLMDRKVCDEMKRLKEKNPFVRGLVSWVGFKQTAVEYVRDERLAGETKYPLKKMLKLSMDGITTFSHKPLKLASYAGILMSGTGFLYMFIVLYLKLFTDSTITGWSSLIVIQLLFSGIVLLILGVIGEYIGRIYDEAKDRPLYIVQKSYGIENKRLYRDQHMS.

The next 2 membrane-spanning stretches (helical) occupy residues 232–252 (LASYAGILMSGTGFLYMFIVL) and 267–287 (SLIVIQLLFSGIVLLILGVIG).

This sequence belongs to the glycosyltransferase 2 family. GtrB subfamily.

The protein localises to the cell membrane. This is an uncharacterized protein from Bacillus subtilis (strain 168).